The primary structure comprises 186 residues: Lipid A acyltransferase PagP (186 aa).

A signal peptide spans 1–25; sequence MNVSKYVAIFSFVFIQLISVGKVFA. Active-site residues include His-58, Asp-101, and Ser-102.

This sequence belongs to the lipid A palmitoyltransferase family. In terms of assembly, homodimer.

The protein localises to the cell outer membrane. The enzyme catalyses a lipid A + a 1,2-diacyl-sn-glycero-3-phosphocholine = a hepta-acyl lipid A + a 2-acyl-sn-glycero-3-phosphocholine. It catalyses the reaction a lipid IVA + a 1,2-diacyl-sn-glycero-3-phosphocholine = a lipid IVB + a 2-acyl-sn-glycero-3-phosphocholine. It carries out the reaction a lipid IIA + a 1,2-diacyl-sn-glycero-3-phosphocholine = a lipid IIB + a 2-acyl-sn-glycero-3-phosphocholine. Its function is as follows. Transfers a fatty acid residue from the sn-1 position of a phospholipid to the N-linked hydroxyfatty acid chain on the proximal unit of lipid A or its precursors. This chain is Lipid A acyltransferase PagP, found in Shigella boydii serotype 4 (strain Sb227).